A 590-amino-acid polypeptide reads, in one-letter code: Glutamine--tRNA ligase (590 aa).

A 'HIGH' region motif is present at residues 55 to 65; the sequence is PEPNGYLHIGH. ATP contacts are provided by residues 56-58 and 62-68; these read EPN and HIGHAKS. Positions 93 and 238 each coordinate L-glutamine. Residues threonine 257 and 292 to 293 contribute to the ATP site; that span reads RL. Positions 299 to 303 match the 'KMSKS' region motif; the sequence is ITSKR.

This sequence belongs to the class-I aminoacyl-tRNA synthetase family. In terms of assembly, monomer.

The protein resides in the cytoplasm. It carries out the reaction tRNA(Gln) + L-glutamine + ATP = L-glutaminyl-tRNA(Gln) + AMP + diphosphate. This Polynucleobacter necessarius subsp. necessarius (strain STIR1) protein is Glutamine--tRNA ligase.